The following is a 432-amino-acid chain: UDP-glucosyltransferase B1 (432 aa).

The protein belongs to the UDP-glycosyltransferase family.

The catalysed reaction is (9Z)-17-hydroxyoctadec-9-enoate 17-O-beta-D-glucoside + UDP-alpha-D-glucose = (9Z)-17-hydroxyoctadec-9-enoate 17-O-sophoroside + UDP + H(+). In terms of biological role, catalyzes the second glycosylation step of sophorolipid biosynthesis, the further glucosylation of the previoulsy formed glucolipid to give rise to an acidic sophorolipid. This chain is UDP-glucosyltransferase B1, found in Starmerella bombicola (Yeast).